Consider the following 279-residue polypeptide: uncharacterized protein (279 aa).

2 disordered regions span residues 50–109 (YTYN…YNKN) and 249–279 (SQSQ…SPKL). The segment covering 68 to 109 (NNNSNYNNNNNNNNNNNNNNNNNNNNNNNKNNNNNNYNYNKN) has biased composition (low complexity).

This is an uncharacterized protein from Dictyostelium discoideum (Social amoeba).